The chain runs to 232 residues: Ubiquinone biosynthesis O-methyltransferase (232 aa).

Positions 36, 55, 76, and 120 each coordinate S-adenosyl-L-methionine.

It belongs to the methyltransferase superfamily. UbiG/COQ3 family.

The catalysed reaction is a 3-demethylubiquinol + S-adenosyl-L-methionine = a ubiquinol + S-adenosyl-L-homocysteine + H(+). It carries out the reaction a 3-(all-trans-polyprenyl)benzene-1,2-diol + S-adenosyl-L-methionine = a 2-methoxy-6-(all-trans-polyprenyl)phenol + S-adenosyl-L-homocysteine + H(+). The protein operates within cofactor biosynthesis; ubiquinone biosynthesis. Its function is as follows. O-methyltransferase that catalyzes the 2 O-methylation steps in the ubiquinone biosynthetic pathway. This chain is Ubiquinone biosynthesis O-methyltransferase, found in Pseudomonas savastanoi pv. phaseolicola (strain 1448A / Race 6) (Pseudomonas syringae pv. phaseolicola (strain 1448A / Race 6)).